The primary structure comprises 333 residues: DNA-directed RNA polymerase subunit alpha (333 aa).

The segment at 1-233 (MVREKIRVST…DLFIPFLHAE (233 aa)) is alpha N-terminal domain (alpha-NTD). An alpha C-terminal domain (alpha-CTD) region spans residues 269–333 (IALKYIFIDQ…DILEMEKNFA (65 aa)).

Belongs to the RNA polymerase alpha chain family. In plastids the minimal PEP RNA polymerase catalytic core is composed of four subunits: alpha, beta, beta', and beta''. When a (nuclear-encoded) sigma factor is associated with the core the holoenzyme is formed, which can initiate transcription.

It localises to the plastid. It is found in the chloroplast. The enzyme catalyses RNA(n) + a ribonucleoside 5'-triphosphate = RNA(n+1) + diphosphate. In terms of biological role, DNA-dependent RNA polymerase catalyzes the transcription of DNA into RNA using the four ribonucleoside triphosphates as substrates. The chain is DNA-directed RNA polymerase subunit alpha from Cucumis sativus (Cucumber).